Here is a 127-residue protein sequence, read N- to C-terminus: Protein KRTCAP2 homolog (127 aa).

Helical transmembrane passes span L13–F33, I41–I61, V65–H85, and V87–S107.

This sequence belongs to the KRTCAP2 family. As to quaternary structure, component of the oligosaccharyltransferase (OST) complex.

The protein resides in the membrane. Functionally, subunit of the oligosaccharyl transferase (OST) complex that catalyzes the initial transfer of a defined glycan (Glc(3)Man(9)GlcNAc(2) in eukaryotes) from the lipid carrier dolichol-pyrophosphate to an asparagine residue within an Asn-X-Ser/Thr consensus motif in nascent polypeptide chains, the first step in protein N-glycosylation. N-glycosylation occurs cotranslationally and the complex associates with the Sec61 complex at the channel-forming translocon complex that mediates protein translocation across the endoplasmic reticulum (ER). All subunits are required for a maximal enzyme activity. This chain is Protein KRTCAP2 homolog, found in Dictyostelium discoideum (Social amoeba).